A 108-amino-acid chain; its full sequence is CRISPR-associated endoribonuclease Cas2 (108 aa).

Aspartate 15 lines the Mg(2+) pocket.

The protein belongs to the CRISPR-associated endoribonuclease Cas2 protein family. In terms of assembly, homodimer, forms a heterotetramer with a Cas1 homodimer. Requires Mg(2+) as cofactor.

Functionally, CRISPR (clustered regularly interspaced short palindromic repeat), is an adaptive immune system that provides protection against mobile genetic elements (viruses, transposable elements and conjugative plasmids). CRISPR clusters contain sequences complementary to antecedent mobile elements and target invading nucleic acids. CRISPR clusters are transcribed and processed into CRISPR RNA (crRNA). Functions as a ssRNA-specific endoribonuclease. Involved in the integration of spacer DNA into the CRISPR cassette. In Paracidovorax avenae (strain ATCC 19860 / DSM 7227 / CCUG 15838 / JCM 20985 / LMG 2117 / NCPPB 1011) (Acidovorax avenae), this protein is CRISPR-associated endoribonuclease Cas2.